The primary structure comprises 39 residues: Photosystem II reaction center protein J (39 aa).

The helical transmembrane segment at 7 to 27 (IPLWLVATIGGIAVLTVLGLF) threads the bilayer.

Belongs to the PsbJ family. As to quaternary structure, PSII is composed of 1 copy each of membrane proteins PsbA, PsbB, PsbC, PsbD, PsbE, PsbF, PsbH, PsbI, PsbJ, PsbK, PsbL, PsbM, PsbT, PsbX, PsbY, PsbZ, Psb30/Ycf12, at least 3 peripheral proteins of the oxygen-evolving complex and a large number of cofactors. It forms dimeric complexes.

It is found in the plastid. The protein resides in the chloroplast thylakoid membrane. Its function is as follows. One of the components of the core complex of photosystem II (PSII). PSII is a light-driven water:plastoquinone oxidoreductase that uses light energy to abstract electrons from H(2)O, generating O(2) and a proton gradient subsequently used for ATP formation. It consists of a core antenna complex that captures photons, and an electron transfer chain that converts photonic excitation into a charge separation. The polypeptide is Photosystem II reaction center protein J (Cyanidioschyzon merolae (strain NIES-3377 / 10D) (Unicellular red alga)).